Here is a 523-residue protein sequence, read N- to C-terminus: Solute carrier family 2, facilitated glucose transporter member 2 (523 aa).

Over 1–10 the chain is Cytoplasmic; that stretch reads MSEDKITGTL. The chain crosses the membrane as a helical span at residues 11 to 31; sequence AFTVFTAVLSSFQFGYDIGVI. The Extracellular segment spans residues 32–97; that stretch reads NAPQEVIISH…SAHIVTMLWS (66 aa). Asparagine 62 is a glycosylation site (N-linked (GlcNAc...) asparagine). Residues 98–118 form a helical membrane-spanning segment; that stretch reads LSVSSFAVGGMVASFFGGWLG. Topologically, residues 119-126 are cytoplasmic; the sequence is DKLGRIKA. The helical transmembrane segment at 127–147 threads the bilayer; the sequence is MLAANSLSLTGALLMGCSKFG. The Extracellular portion of the chain corresponds to 148–157; sequence PAHALIIAGR. The chain crosses the membrane as a helical span at residues 158-178; it reads SVSGLYCGLISGLVPMYIGEI. The Cytoplasmic segment spans residues 179 to 186; that stretch reads APTTLRGA. A helical transmembrane segment spans residues 187-207; sequence LGTLHQLALVTGILISQIAGL. Glutamine 192 is a binding site for D-glucose. At 208–216 the chain is on the extracellular side; sequence SFILGNQDH. The chain crosses the membrane as a helical span at residues 217 to 237; the sequence is WHILLGLSAVPALLQCLLLLF. The Cytoplasmic portion of the chain corresponds to 238-302; it reads CPESPRYLYI…LFTDANYRQP (65 aa). Residues 303-323 form a helical membrane-spanning segment; sequence ILVALMLHMAQQFSGINGIFY. Residues 313 to 314 and asparagine 319 each bind D-glucose; that span reads QQ. At 324 to 337 the chain is on the extracellular side; that stretch reads YSTSIFQTAGISQP. The chain crosses the membrane as a helical span at residues 338-358; the sequence is VYATIGVGAINMIFTAVSVLL. Asparagine 348 contributes to the D-glucose binding site. At 359-367 the chain is on the cytoplasmic side; sequence VEKAGRRTL. A helical membrane pass occupies residues 368-388; the sequence is FLTGMIGMFFCTIFMSVGLVL. Residues 389–401 lie on the Extracellular side of the membrane; it reads LDKFAWMSYVSMT. The helical transmembrane segment at 402 to 422 threads the bilayer; that stretch reads AIFLFVSFFEIGPGPIPWFMV. D-glucose is bound by residues glutamate 411 and tryptophan 419. At 423–432 the chain is on the cytoplasmic side; sequence AEFFSQGPRP. Residues 433 to 453 traverse the membrane as a helical segment; that stretch reads TALALAAFSNWVCNFVIALCF. Topologically, residues 454–460 are extracellular; sequence QYIADFL. A helical transmembrane segment spans residues 461–481; sequence GPYVFFLFAGVVLVFTLFTFF. Over 482–523 the chain is Cytoplasmic; sequence KVPETKGKSFEEIAAEFRKKSGSAPPRKAAVQMEFLASSESV. Serine 522 is modified (phosphoserine).

This sequence belongs to the major facilitator superfamily. Sugar transporter (TC 2.A.1.1) family. Glucose transporter subfamily. Post-translationally, N-glycosylated; required for stability and retention at the cell surface of pancreatic beta cells. In embryo, expressed in endoderm layer of yolk sac and liver primordium.

The protein resides in the cell membrane. It carries out the reaction D-glucose(out) = D-glucose(in). The catalysed reaction is D-fructose(out) = D-fructose(in). The enzyme catalyses L-dehydroascorbate(out) = L-dehydroascorbate(in). It catalyses the reaction D-galactose(in) = D-galactose(out). Its activity is regulated as follows. D-glucose and maltose competitively inhibit fructose transport. D-glucose, D-fructose and maltose inhibit deoxyglucose transport. Functionally, facilitative hexose transporter that mediates the transport of glucose, fructose and galactose. Likely mediates the bidirectional transfer of glucose across the plasma membrane of hepatocytes and is responsible for uptake of glucose by the beta cells; may comprise part of the glucose-sensing mechanism of the beta cell. May also participate with the Na(+)/glucose cotransporter in the transcellular transport of glucose in the small intestine and kidney. Also able to mediate the transport of dehydroascorbate. The polypeptide is Solute carrier family 2, facilitated glucose transporter member 2 (Mus musculus (Mouse)).